We begin with the raw amino-acid sequence, 266 residues long: Tryptophan synthase alpha chain (266 aa).

Residues glutamate 49 and aspartate 60 each act as proton acceptor in the active site.

Belongs to the TrpA family. In terms of assembly, tetramer of two alpha and two beta chains.

The enzyme catalyses (1S,2R)-1-C-(indol-3-yl)glycerol 3-phosphate + L-serine = D-glyceraldehyde 3-phosphate + L-tryptophan + H2O. Its pathway is amino-acid biosynthesis; L-tryptophan biosynthesis; L-tryptophan from chorismate: step 5/5. Functionally, the alpha subunit is responsible for the aldol cleavage of indoleglycerol phosphate to indole and glyceraldehyde 3-phosphate. This chain is Tryptophan synthase alpha chain, found in Trichormus variabilis (strain ATCC 29413 / PCC 7937) (Anabaena variabilis).